Reading from the N-terminus, the 487-residue chain is GTPase Der (487 aa).

2 consecutive EngA-type G domains span residues Phe3 to Ala167 and Leu203 to Asn378. Residues Gly9 to Ser16, Asp56 to Leu60, Asn119 to Glu122, Gly209 to Ser216, Asp256 to Met260, and Asn321 to Asp324 contribute to the GTP site. The KH-like domain occupies Arg379–Gly463. Residues Met459 to Gly487 are disordered. Basic residues predominate over residues Arg471–Gly487.

It belongs to the TRAFAC class TrmE-Era-EngA-EngB-Septin-like GTPase superfamily. EngA (Der) GTPase family. Associates with the 50S ribosomal subunit.

GTPase that plays an essential role in the late steps of ribosome biogenesis. The sequence is that of GTPase Der from Cereibacter sphaeroides (strain ATCC 17025 / ATH 2.4.3) (Rhodobacter sphaeroides).